The sequence spans 375 residues: Growth/differentiation factor 8 (375 aa).

Residues 1-23 form the signal peptide; sequence MQKLAVYVYIYLFVQISVDPVAL. Positions 24 to 266 are excised as a propeptide; sequence DGSSQPTENT…VTDTPKRSRR (243 aa). N-linked (GlcNAc...) asparagine glycosylation occurs at asparagine 71. 4 disulfides stabilise this stretch: cysteine 272-cysteine 282, cysteine 281-cysteine 340, cysteine 309-cysteine 372, and cysteine 313-cysteine 374.

This sequence belongs to the TGF-beta family. Homodimer; disulfide-linked.

The protein resides in the secreted. Its function is as follows. Acts specifically as a negative regulator of skeletal muscle growth. This chain is Growth/differentiation factor 8 (MSTN), found in Excalfactoria chinensis (Blue-breasted quail).